The primary structure comprises 387 residues: Dynactin subunit 2 (387 aa).

3 coiled-coil regions span residues Leu-99 to Arg-125, Ser-256 to Thr-282, and Thr-355 to Lys-387.

The protein belongs to the dynactin subunit 2 family. In terms of assembly, subunit of dynactin, a multiprotein complex associated with dynein.

The protein localises to the cytoplasm. It is found in the cytoskeleton. The protein resides in the membrane. Modulates cytoplasmic dynein binding to an organelle, and plays a role in prometaphase chromosome alignment and spindle organization during mitosis. In Anopheles gambiae (African malaria mosquito), this protein is Dynactin subunit 2.